The primary structure comprises 234 residues: Interleukin-27 subunit alpha (234 aa).

The N-terminal stretch at 1–28 is a signal peptide; that stretch reads MGQVTGDLGWRLSLLLLPLLLVQAGSWG. The N-linked (GlcNAc...) asparagine glycan is linked to N85. The disordered stretch occupies residues 160 to 185; that stretch reads KEEEDKEEEEEEEEEEKKLPLGALGG. A compositionally biased stretch (acidic residues) spans 161–174; it reads EEEDKEEEEEEEEE.

It belongs to the IL-6 superfamily. Heterodimer with EBI3; not disulfide-linked. This heterodimer is known as interleukin IL-27. O-glycosylated. In terms of tissue distribution, expressed in macrophages and dendritic cells.

Its subcellular location is the secreted. Associates with EBI3 to form the IL-27 interleukin, a heterodimeric cytokine which functions in innate immunity. IL-27 has pro- and anti-inflammatory properties, that can regulate T-helper cell development, suppress T-cell proliferation, stimulate cytotoxic T-cell activity, induce isotype switching in B-cells, and that has diverse effects on innate immune cells. Among its target cells are CD4 T-helper cells which can differentiate in type 1 effector cells (TH1), type 2 effector cells (TH2) and IL17 producing helper T-cells (TH17). It drives rapid clonal expansion of naive but not memory CD4 T-cells. It also strongly synergizes with IL-12 to trigger interferon-gamma/IFN-gamma production of naive CD4 T-cells, binds to the cytokine receptor WSX-1/TCCR which appears to be required but not sufficient for IL-27-mediated signal transduction. IL-27 potentiate the early phase of TH1 response and suppress TH2 and TH17 differentiation. It induces the differentiation of TH1 cells via two distinct pathways, p38 MAPK/TBX21- and ICAM1/ITGAL/ERK-dependent pathways. It also induces STAT1, STAT3, STAT4 and STAT5 phosphorylation and activates TBX21/T-Bet via STAT1 with resulting IL12RB2 up-regulation, an event crucial to TH1 cell commitment. It suppresses the expression of GATA3, the inhibitor TH1 cells development. In CD8 T-cells, it activates STATs as well as GZMB. IL-27 reveals to be a potent inhibitor of TH17 cell development and of IL-17 production. Indeed IL27 alone is also able to inhibit the production of IL17 by CD4 and CD8 T-cells. While IL-27 suppressed the development of pro-inflammatory Th17 cells via STAT1, it inhibits the development of anti-inflammatory inducible regulatory T-cells, iTreg, independently of STAT1. IL-27 also has an effect on cytokine production, it suppresses pro-inflammatory cytokine production such as IL2, IL4, IL5 and IL6 and activates suppressors of cytokine signaling such as SOCS1 and SOCS3. Apart from suppression of cytokine production, IL-27 also antagonizes the effects of some cytokines such as IL6 through direct effects on T-cells. Another important role of IL-27 is its antitumor activity as well as its antiangiogenic activity with activation of production of antiangiogenic chemokines such as IP-10/CXCL10 and MIG/CXCL9. The chain is Interleukin-27 subunit alpha (Il27) from Mus musculus (Mouse).